The chain runs to 190 residues: dTTP/UTP pyrophosphatase (190 aa).

Catalysis depends on Asp68, which acts as the Proton acceptor.

It belongs to the Maf family. YhdE subfamily. It depends on a divalent metal cation as a cofactor.

Its subcellular location is the cytoplasm. It carries out the reaction dTTP + H2O = dTMP + diphosphate + H(+). The enzyme catalyses UTP + H2O = UMP + diphosphate + H(+). Functionally, nucleoside triphosphate pyrophosphatase that hydrolyzes dTTP and UTP. May have a dual role in cell division arrest and in preventing the incorporation of modified nucleotides into cellular nucleic acids. The protein is dTTP/UTP pyrophosphatase of Pyrococcus furiosus (strain ATCC 43587 / DSM 3638 / JCM 8422 / Vc1).